A 584-amino-acid polypeptide reads, in one-letter code: uncharacterized protein (584 aa).

PbH1 repeat units follow at residues Gln-100–His-128, Cys-139–Pro-161, Ser-173–Gly-195, Cys-196–Gly-225, Pro-236–Gly-266, Thr-313–Arg-333, Gly-334–Gln-356, Ser-357–Ala-382, Gly-406–Gln-427, Asn-456–Thr-478, and Ser-529–Thr-554.

This is an uncharacterized protein from Bacillus subtilis (strain 168).